The chain runs to 382 residues: MKVHEYQAKEIFSTYGIPVERHALCHTADGAVAAYHRMGVNRVAIKAQVLTGGRGKAGGVKLANNDRDVYQYAQTILEMTIKGYPVTKILLSEAVNIAAEYYISFTIDRNTRSVTLIMSAAGGMDIEEVARQSPEKIIRCSIDPLIGVPDYLAHKFAFSLFEQAEQANRMATIIQDLYKAFIEKDASLAEINPLVLTPVGTLLAIDAKMVFDDNALYRHPDLQKLSEPTEDEKLEAIAKERGFSYVRMDGEIGCMVNGAGLAMTTMDMIKLYGGNPANFLDIGGSSNPVKVIEAMRLLLDDKKVKVVFINIFGGITRCDDVAIGLLQAFEQIQTDIPIIVRLTGTNGNMGRELLRKNNRFQVAQTMEEATKMAIESLKKESI.

ATP contacts are provided by residues Lys-46, Gly-53–Gly-55, Val-95, and Glu-100. 2 residues coordinate Mg(2+): Asn-192 and Asp-206. Residues Asn-257 and Gly-314–Thr-316 contribute to the substrate site.

It belongs to the succinate/malate CoA ligase beta subunit family. Heterotetramer of two alpha and two beta subunits. It depends on Mg(2+) as a cofactor.

It catalyses the reaction succinate + ATP + CoA = succinyl-CoA + ADP + phosphate. The enzyme catalyses GTP + succinate + CoA = succinyl-CoA + GDP + phosphate. Its pathway is carbohydrate metabolism; tricarboxylic acid cycle; succinate from succinyl-CoA (ligase route): step 1/1. Succinyl-CoA synthetase functions in the citric acid cycle (TCA), coupling the hydrolysis of succinyl-CoA to the synthesis of either ATP or GTP and thus represents the only step of substrate-level phosphorylation in the TCA. The beta subunit provides nucleotide specificity of the enzyme and binds the substrate succinate, while the binding sites for coenzyme A and phosphate are found in the alpha subunit. The sequence is that of Succinate--CoA ligase [ADP-forming] subunit beta from Bacteroides fragilis (strain ATCC 25285 / DSM 2151 / CCUG 4856 / JCM 11019 / LMG 10263 / NCTC 9343 / Onslow / VPI 2553 / EN-2).